The chain runs to 200 residues: Late embryogenesis abundant protein 19 (200 aa).

Disordered stretches follow at residues 1-158 (MASH…KSTV) and 172-200 (TEDK…ARDH). Composition is skewed to basic and acidic residues over residues 13 to 23 (GETKAHTEEKA), 30 to 42 (SKDK…DRAS), 53 to 81 (QDTK…KDKT), 88 to 97 (ARDKAAESKD), and 105 to 114 (EKTEQAKQKA). Residues 52-81 (GQDTKEATKEKAQAAKERASETAQAAKDKT) are a coiled coil. Positions 115–130 (AETAGAAKQKTAETAQ) are enriched in low complexity. The segment covering 145–156 (SVLQQASEQVKS) has biased composition (polar residues). The span at 172–183 (TEDKAGTDDGAN) shows a compositional bias: basic and acidic residues. Residues 186-200 (TSATAAATETTARDH) are compositionally biased toward low complexity.

Belongs to the LEA type 4 family. In terms of tissue distribution, expressed in the shoot apex and leaves.

Its function is as follows. Involved in response to drought stress. The sequence is that of Late embryogenesis abundant protein 19 from Oryza sativa subsp. indica (Rice).